We begin with the raw amino-acid sequence, 884 residues long: MTDVTVKSLAAEIQTPVDRLVQQFADAGIKKSDVDSVTQQEKEILLAHLNREHGSVPNKLTLQRKTRSTLNIPSTGGKSKSVQIEVRKKRTYVNTPEAEQAKAEEQAQREAEATAQKIAEEKAKREAEEQAKREAAEKAKRQAAEKEKVTNQQTDEKTKPAQTDKARREAEAAELKRSVEEETRRKVEEDAKRVAEEARKMAAENEGKWPEPVAEQTESADYHVTTSQHARAAEDENDAKVEGDRRSRTRGGKATKQKKGNKLSESKADREEARAVGRKGKRKPSTLQQSFNKPVVAVNRDVVIGETVTVAELANKMAVKGSQVIKAMMKLGAMATINQVIDQETAQLVAEEIGHKVILRRENELEEALMSDRDIGVEAAAEHRAPVVTIMGHVDHGKTSLLDYIRSTKVASGEAGGITQHIGAYHVETENGMITFLDTPGHAAFTSMRARGAQATDIVVLVVAADDGVMPQTIEAIQHAKAANVPVVVAVNKIDKPEADPDRVKTELSQYGIQPEEWGGESQFINVSAKAGIGIDELLNAILLQAEVLELKAVRTGMANGVVIESFLDKGRGPVATVLVQQGTLNKGDIVLCGFEYGRVRAMRDELGRDITSAGPSIPVEILGLSSVPAAGDEVTVVRDEKKAREVALYRQGKFREVKLARQQKSKLENMFANMTEGEVSELNIVIKSDVQGSCEAICDSLEKLSTDEVKVRIVGSGVGGITETDATLAAASGAIILGFNVRADASARRVVETEGLDLRYYSVIYSLIDEVKQAMSGMLAPEYKQQIIGLAEVRDVFKSPKFGAIAGCMVTEGVIKRNNPIRVLRDNVVIYEGELESLRRFKDDVSEVRNGMECGIGVKNYNDVRTGDVIEVFEIIEIKRTIA.

Residues 93–288 form a disordered region; that stretch reads VNTPEAEQAK…KGKRKPSTLQ (196 aa). Positions 99–209 are enriched in basic and acidic residues; sequence EQAKAEEQAQ…KMAAENEGKW (111 aa). The segment covering 216–229 has biased composition (polar residues); the sequence is QTESADYHVTTSQH. Positions 231 to 246 are enriched in basic and acidic residues; the sequence is RAAEDENDAKVEGDRR. Over residues 247–261 the composition is skewed to basic residues; the sequence is SRTRGGKATKQKKGN. The span at 262–275 shows a compositional bias: basic and acidic residues; sequence KLSESKADREEARA. One can recognise a tr-type G domain in the interval 383-552; sequence HRAPVVTIMG…LLQAEVLELK (170 aa). Positions 392–399 are G1; it reads GHVDHGKT. 392-399 is a binding site for GTP; it reads GHVDHGKT. Residues 417-421 are G2; sequence GITQH. The interval 438–441 is G3; the sequence is DTPG. GTP is bound by residues 438-442 and 492-495; these read DTPGH and NKID. Positions 492–495 are G4; the sequence is NKID. Residues 528–530 form a G5 region; the sequence is SAK.

Belongs to the TRAFAC class translation factor GTPase superfamily. Classic translation factor GTPase family. IF-2 subfamily.

The protein resides in the cytoplasm. Its function is as follows. One of the essential components for the initiation of protein synthesis. Protects formylmethionyl-tRNA from spontaneous hydrolysis and promotes its binding to the 30S ribosomal subunits. Also involved in the hydrolysis of GTP during the formation of the 70S ribosomal complex. This chain is Translation initiation factor IF-2, found in Yersinia pestis bv. Antiqua (strain Angola).